A 47-amino-acid polypeptide reads, in one-letter code: Mu-theraphotoxin-An1a (47 aa).

3 cysteine pairs are disulfide-bonded: Cys-4–Cys-34, Cys-8–Cys-39, and Cys-22–Cys-44.

Contains 3 disulfide bonds. Expressed by the venom gland.

The protein resides in the secreted. Is toxic to insects. Reduces amplitude and frequency of spontaneous firing and inhibits voltage-gated sodium current (Nav) in the dorsal unpaired median (DUM) neurons of P.americana. The chain is Mu-theraphotoxin-An1a from Acanthoscurria natalensis (Tarantula spider).